Consider the following 371-residue polypeptide: GDSL esterase/lipase At3g27950 (371 aa).

A signal peptide spans 1-23 (MAISKITLAIIVLLLGFTEKLSA). Ser39 acts as the Nucleophile in catalysis. Residues Asn82, Asn143, Asn178, Asn194, and Asn315 are each glycosylated (N-linked (GlcNAc...) asparagine). Active-site residues include Asp334 and His337.

Belongs to the 'GDSL' lipolytic enzyme family.

The protein resides in the secreted. This is GDSL esterase/lipase At3g27950 from Arabidopsis thaliana (Mouse-ear cress).